Here is a 225-residue protein sequence, read N- to C-terminus: Redox-sensing transcriptional repressor Rex (225 aa).

A DNA-binding region (H-T-H motif) is located at residues 16–55 (IYYRYLNILLDADKKRVSSTELSEAVKVDSATIRRDFSYF). Residue 90–95 (GVGNLG) coordinates NAD(+).

This sequence belongs to the transcriptional regulatory Rex family. Homodimer.

It is found in the cytoplasm. Its function is as follows. Modulates transcription in response to changes in cellular NADH/NAD(+) redox state. This Lactiplantibacillus plantarum (strain ATCC BAA-793 / NCIMB 8826 / WCFS1) (Lactobacillus plantarum) protein is Redox-sensing transcriptional repressor Rex.